The chain runs to 125 residues: Large ribosomal subunit protein bL21 (125 aa).

Residues Phe75–His89 are compositionally biased toward basic residues. Disordered stretches follow at residues Phe75 to Thr94 and Ala103 to Ala125. The span at Ala106–Ala125 shows a compositional bias: low complexity.

The protein belongs to the bacterial ribosomal protein bL21 family. As to quaternary structure, part of the 50S ribosomal subunit. Contacts protein L20.

Its function is as follows. This protein binds to 23S rRNA in the presence of protein L20. The sequence is that of Large ribosomal subunit protein bL21 from Methylocella silvestris (strain DSM 15510 / CIP 108128 / LMG 27833 / NCIMB 13906 / BL2).